Reading from the N-terminus, the 506-residue chain is Cytochrome P450 6a8 (506 aa).

Cys-451 contacts heme.

This sequence belongs to the cytochrome P450 family. It depends on heme as a cofactor.

The protein localises to the endoplasmic reticulum membrane. Its subcellular location is the microsome membrane. Involved in the metabolism of insect hormones and in the breakdown of synthetic insecticides. This chain is Cytochrome P450 6a8 (Cyp6a8), found in Drosophila melanogaster (Fruit fly).